A 337-amino-acid chain; its full sequence is Glyceraldehyde-3-phosphate dehydrogenase (337 aa).

Residues 13–14 (RI), aspartate 35, and arginine 80 contribute to the NAD(+) site. Residues 151–153 (SCT), threonine 182, 211–212 (TG), and arginine 234 contribute to the D-glyceraldehyde 3-phosphate site. The active-site Nucleophile is cysteine 152. NAD(+) is bound at residue asparagine 316.

This sequence belongs to the glyceraldehyde-3-phosphate dehydrogenase family. As to quaternary structure, homotetramer.

It localises to the cytoplasm. It carries out the reaction D-glyceraldehyde 3-phosphate + phosphate + NAD(+) = (2R)-3-phospho-glyceroyl phosphate + NADH + H(+). Its pathway is carbohydrate degradation; glycolysis; pyruvate from D-glyceraldehyde 3-phosphate: step 1/5. This is Glyceraldehyde-3-phosphate dehydrogenase (GPD1) from Monascus purpureus (Red mold).